Consider the following 438-residue polypeptide: Protein DAY-LENGTH-DEPENDENT DELAYED-GREENING 1, chloroplastic (438 aa).

The N-terminal 54 residues, 1 to 54 (MSLMSSSMVLCHCLSFSSQNPDPESSSSSLLRYKPCDSISLWGKRRKKLWRFVP), are a transit peptide targeting the chloroplast. The next 4 helical transmembrane spans lie at 216–236 (FLAVLILIPWALDFLAHDYLL), 314–334 (AFANIWSDMVFGISLFVLLYA), 359–379 (AFLIILITDIFLGYHSESGWE), and 398–418 (ITIFICLVPVIMDACVKLWLF).

Belongs to the CemA family.

It localises to the plastid. The protein localises to the chloroplast envelope. Its subcellular location is the chloroplast membrane. The enzyme catalyses K(+)(in) + H(+)(out) = K(+)(out) + H(+)(in). It catalyses the reaction Ca(2+)(in) + H(+)(out) = Ca(2+)(out) + H(+)(in). In terms of biological role, promotes K(+)/H(+) antiport activity supporting K(+) efflux to control H(+) homeostasis in chloroplasts. Also able to ensure Ca(2+)/H(+) antiport activity in vitro. Essential for chloroplast pH regulation and optimization of non-photochemical quenching (NPQ), a regulatory mechanism that dissipates excess light energy; acts downstream of PSBS but independently from PGR5 and FLAP1. The sequence is that of Protein DAY-LENGTH-DEPENDENT DELAYED-GREENING 1, chloroplastic from Arabidopsis thaliana (Mouse-ear cress).